The primary structure comprises 257 residues: Ribosomal RNA small subunit methyltransferase A (257 aa).

The S-adenosyl-L-methionine site is built by H12, L14, G39, E60, D83, and N101.

It belongs to the class I-like SAM-binding methyltransferase superfamily. rRNA adenine N(6)-methyltransferase family. RsmA subfamily.

It is found in the cytoplasm. The enzyme catalyses adenosine(1518)/adenosine(1519) in 16S rRNA + 4 S-adenosyl-L-methionine = N(6)-dimethyladenosine(1518)/N(6)-dimethyladenosine(1519) in 16S rRNA + 4 S-adenosyl-L-homocysteine + 4 H(+). Functionally, specifically dimethylates two adjacent adenosines (A1518 and A1519) in the loop of a conserved hairpin near the 3'-end of 16S rRNA in the 30S particle. May play a critical role in biogenesis of 30S subunits. This chain is Ribosomal RNA small subunit methyltransferase A, found in Nitrosomonas europaea (strain ATCC 19718 / CIP 103999 / KCTC 2705 / NBRC 14298).